The chain runs to 411 residues: Common plant regulatory factor 1 (411 aa).

Residues 1–14 (MGNTDDVKAVKPEK) show a composition bias toward basic and acidic residues. Disordered stretches follow at residues 1–30 (MGNTDDVKAVKPEKLSSPPPPAAPDQSNSH), 130–197 (AMSI…SSVI), and 232–293 (SSLE…KQAE). A compositionally biased stretch (polar residues) spans 148-164 (TLSQSKETEGSSDGSNE). Over residues 235 to 244 (ELKDSPKEHA) the composition is skewed to basic and acidic residues. Polar residues predominate over residues 249 to 259 (AGGQQPSTMMP). Basic and acidic residues predominate over residues 264 to 293 (LHNDRDLKRERRKQSNRESARRSRLRKQAE). The 64-residue stretch at 269-332 (DLKRERRKQS…EKLTNDNSRL (64 aa)) folds into the bZIP domain. Residues 271–290 (KRERRKQSNRESARRSRLRK) are basic motif. Residues 297-332 (LAIKVDSLTAENMALKAEINRLTLTAEKLTNDNSRL) form a leucine-zipper region. The disordered stretch occupies residues 346-411 (DVGLGNNNEK…NPRTDAVAAG (66 aa)).

This sequence belongs to the bZIP family. Binds DNA as a dimer.

The protein localises to the nucleus. In terms of biological role, binds to the G-box-like motif (5'-ACGTGGC-3') of the chalcone synthase (CHS) gene promoter. G-box and G-box-like motifs are defined in promoters of certain plant genes which are regulated by such diverse stimuli as light-induction or hormone control. This chain is Common plant regulatory factor 1 (CPRF1), found in Petroselinum crispum (Parsley).